An 806-amino-acid chain; its full sequence is NADH:(hydroxy)cinnamate reductase subunit CrdB (806 aa).

An FMN phosphoryl serine modification is found at S257. Positions 310, 329, 337, 338, 342, 343, and 576 each coordinate FAD. Catalysis depends on R635, which acts as the Proton donor. Residues H742, E771, A786, and L787 each coordinate FAD.

The protein belongs to the FAD-dependent oxidoreductase 2 family. FRD/SDH subfamily. As to quaternary structure, NADH:(hydroxy)cinnamate reductase Crd is a heterodimer composed of CrdA and CrdB subunits, encoded by adjacent genes. It depends on FAD as a cofactor. The cofactor is FMN. In terms of processing, is flavinylated on Ser-257 by ApbE, encoded in a neighboring gene. Covalent attachment of FMN is essential for catalytic activity.

The catalysed reaction is 3-phenylpropanoate + NAD(+) = (E)-cinnamate + NADH + H(+). It carries out the reaction 3-(3,4-dihydroxyphenyl)propanoate + NAD(+) = (E)-caffeate + NADH + H(+). It catalyses the reaction phloretate + NAD(+) = (E)-4-coumarate + NADH + H(+). The enzyme catalyses dihydroferulate + NAD(+) = (E)-ferulate + NADH + H(+). Its activity is regulated as follows. Is inactivated by molecular oxygen, allowing regulation of Crd activity by medium oxygen level. In terms of biological role, component of the NADH:(hydroxy)cinnamate reductase Crd that catalyzes the reduction of the double bond in cinnamate, p-coumarate, caffeate, and ferulate under anaerobic conditions with NADH or methyl viologen as the electron donor. Is moderately active against acrylate and practically inactive against urocanate, fumarate, methacrylate and crotonate. CrdB is the catalytic subunit that binds substrates. Is likely involved in protecting V.ruber from (hydroxy)cinnamate poisoning. In Vibrio ruber (strain DSM 16370 / JCM 11486 / BCRC 17186 / CECT 7878 / LMG 23124 / VR1), this protein is NADH:(hydroxy)cinnamate reductase subunit CrdB.